The chain runs to 453 residues: Macrophage scavenger receptor types I and II (453 aa).

Topologically, residues 1-50 (MAQWDDFPDQQEDTDSCTESVKFDARSVTALLPPHPKNGPTLQERMKSYK) are cytoplasmic. A Phosphoserine modification is found at S27. A helical; Signal-anchor for type II membrane protein transmembrane segment spans residues 51 to 76 (TALITLYLIVFVVLVPIIGIVAAQLL). A spacer region spans residues 77–108 (KWETKNCTVGSVNADISPSPEGKGNGSEDEMR). Residues 77 to 453 (KWETKNCTVG…DEDAGVTCTT (377 aa)) lie on the Extracellular side of the membrane. N82, N101, N142, N183, N220, N248, and N266 each carry an N-linked (GlcNAc...) asparagine glycan. The stretch at 194–255 (ETLNGRVQEN…LNNITNDLRL (62 aa)) forms a coiled coil. Disordered stretches follow at residues 267 to 295 (ITLL…PGFP) and 313 to 349 (PGVR…QRQS). The Collagen-like domain maps to 272–343 (GPPGPPGEKG…KGQKGEKGSG (72 aa)). Residues 352–452 (VRLVGGSGPH…HDEDAGVTCT (101 aa)) enclose the SRCR domain. 3 disulfide bridges follow: C377/C441, C390/C451, and C421/C431.

In terms of assembly, homotrimer. Interacts with MYO18A.

It localises to the membrane. Its function is as follows. Membrane glycoproteins implicated in the pathologic deposition of cholesterol in arterial walls during atherogenesis. Two types of receptor subunits exist. These receptors mediate the endocytosis of a diverse group of macromolecules, including modified low density lipoproteins (LDL). This chain is Macrophage scavenger receptor types I and II (MSR1), found in Bos taurus (Bovine).